The primary structure comprises 224 residues: Small ribosomal subunit protein uS3 (224 aa).

In terms of domain architecture, KH type-2 spans 38–106; sequence IRKFISEKLK…QVHINIVEIK (69 aa).

It belongs to the universal ribosomal protein uS3 family. As to quaternary structure, part of the 30S ribosomal subunit. Forms a tight complex with proteins S10 and S14.

Its function is as follows. Binds the lower part of the 30S subunit head. Binds mRNA in the 70S ribosome, positioning it for translation. This chain is Small ribosomal subunit protein uS3, found in Lactobacillus acidophilus (strain ATCC 700396 / NCK56 / N2 / NCFM).